Consider the following 440-residue polypeptide: General transcription factor IIE subunit 1 (440 aa).

The residue at position 2 (Ala-2) is an N-acetylalanine. Positions 14 to 104 (LKRLAKYVIR…NYRTLVNVVK (91 aa)) constitute an HTH TFE/IIEalpha-type domain. Residue Lys-67 is modified to N6-acetyllysine. Residues Cys-129, Cys-132, Cys-154, and Cys-157 each coordinate Zn(2+). The C4-type zinc-finger motif lies at 129-157 (CPVCCSTFTDLEANQLFDPMTGTFRCTFC). Ser-268 bears the Phosphoserine mark. Low complexity predominate over residues 333–353 (SSVTAGSVGAAAPVTAANGSD). A disordered region spans residues 333–395 (SSVTAGSVGA…EEFEEVADDP (63 aa)). Composition is skewed to acidic residues over residues 354–364 (SESETSESDDD) and 381–393 (EDEE…EVAD).

Belongs to the TFIIE alpha subunit family. In terms of assembly, tetramer of two alpha and two beta chains. Interacts with TAF6/TAFII80. Interacts with ATF7IP. Interacts with SND1. Part of TBP-based Pol II pre-initiation complex (PIC), in which Pol II core assembles with general transcription factors and other specific initiation factors including GTF2E1, GTF2E2, GTF2F1, GTF2F2, TCEA1, ERCC2, ERCC3, GTF2H2, GTF2H3, GTF2H4, GTF2H5, GTF2A1, GTF2A2, GTF2B and TBP; this large multi-subunit PIC complex mediates DNA unwinding and targets Pol II core to the transcription start site where the first phosphodiester bond forms.

It is found in the nucleus. Recruits TFIIH to the initiation complex and stimulates the RNA polymerase II C-terminal domain kinase and DNA-dependent ATPase activities of TFIIH. Both TFIIH and TFIIE are required for promoter clearance by RNA polymerase. This Mus musculus (Mouse) protein is General transcription factor IIE subunit 1 (Gtf2e1).